The sequence spans 114 residues: Beta-microseminoprotein (114 aa).

The signal sequence occupies residues 1–20 (MNVLLGSVVIFATFVTLCNA). Disulfide bonds link Cys22–Cys70, Cys38–Cys62, Cys57–Cys93, Cys60–Cys69, and Cys84–Cys107.

Belongs to the beta-microseminoprotein family. As to quaternary structure, homodimer; Interacts with PI16. As to expression, strongly expressed in prostate, liver, kidney, breast and penis. Also expressed in pancreas, esophagus, stomach, deodenum, colon, trachea, lung, salivary glands and fallopian tube. PSP94 is expressed in lung and breast, whereas PSP57 is found in kidney and bladder.

It is found in the secreted. The polypeptide is Beta-microseminoprotein (MSMB) (Homo sapiens (Human)).